Here is a 382-residue protein sequence, read N- to C-terminus: Flap endonuclease 1 (382 aa).

The interval 1-104 is N-domain; sequence MGILGLSKLI…GELAKRAERR (104 aa). Asp-34 contacts Mg(2+). The DNA site is built by Arg-47 and Arg-70. Residue Asp-86 coordinates Mg(2+). Positions 95-118 are disordered; the sequence is GELAKRAERREDAQKALEKATEAG. Positions 96–115 are enriched in basic and acidic residues; it reads ELAKRAERREDAQKALEKAT. Residues 122–253 form an I-domain region; the sequence is DMDKFNRRLV…KRATELMNSY (132 aa). The Mg(2+) site is built by Glu-158, Glu-160, Asp-179, and Asp-181. Glu-158 contributes to the DNA binding site. Gly-231 and Asp-233 together coordinate DNA. A Mg(2+)-binding site is contributed by Asp-233. Residues 336-344 form an interaction with PCNA region; the sequence is TQGRLDSFF. The tract at residues 353–382 is disordered; sequence TTPKRKADDKNNVQQKKSKTAGNTKGKRPK. Over residues 364-375 the composition is skewed to polar residues; it reads NVQQKKSKTAGN.

This sequence belongs to the XPG/RAD2 endonuclease family. FEN1 subfamily. In terms of assembly, interacts with PCNA. Three molecules of FEN1 bind to one PCNA trimer with each molecule binding to one PCNA monomer. PCNA stimulates the nuclease activity without altering cleavage specificity. It depends on Mg(2+) as a cofactor. Phosphorylated. Phosphorylation upon DNA damage induces relocalization to the nuclear plasma.

The protein localises to the nucleus. It is found in the nucleolus. The protein resides in the nucleoplasm. Its subcellular location is the mitochondrion. Functionally, structure-specific nuclease with 5'-flap endonuclease and 5'-3' exonuclease activities involved in DNA replication and repair. During DNA replication, cleaves the 5'-overhanging flap structure that is generated by displacement synthesis when DNA polymerase encounters the 5'-end of a downstream Okazaki fragment. It enters the flap from the 5'-end and then tracks to cleave the flap base, leaving a nick for ligation. Also involved in the long patch base excision repair (LP-BER) pathway, by cleaving within the apurinic/apyrimidinic (AP) site-terminated flap. Acts as a genome stabilization factor that prevents flaps from equilibrating into structures that lead to duplications and deletions. Also possesses 5'-3' exonuclease activity on nicked or gapped double-stranded DNA, and exhibits RNase H activity. Also involved in replication and repair of rDNA and in repairing mitochondrial DNA. This chain is Flap endonuclease 1, found in Glossina morsitans morsitans (Savannah tsetse fly).